A 667-amino-acid chain; its full sequence is Bifunctional polymyxin resistance protein ArnA (667 aa).

The formyltransferase ArnAFT stretch occupies residues 1–304; that stretch reads MKAIVFAYHD…EMGIVTDVRL (304 aa). His104 (proton donor; for formyltransferase activity) is an active-site residue. (6R)-10-formyltetrahydrofolate is bound by residues Arg114 and 136-140; that span reads VKKAD. Positions 314 to 667 are dehydrogenase ArnADH; the sequence is RRTRVLILGV…TAAPKDELNA (354 aa). NAD(+) is bound by residues Asp347 and 368–369; that span reads DI. UDP-alpha-D-glucuronate is bound by residues Ala393, Tyr398, and 432-433; that span reads TS. Glu434 serves as the catalytic Proton acceptor; for decarboxylase activity. Residues Arg460, Asn492, 526 to 535, and Tyr613 contribute to the UDP-alpha-D-glucuronate site; that span reads KLVDGGAQKR. Catalysis depends on Arg619, which acts as the Proton donor; for decarboxylase activity.

This sequence in the N-terminal section; belongs to the Fmt family. UDP-L-Ara4N formyltransferase subfamily. The protein in the C-terminal section; belongs to the NAD(P)-dependent epimerase/dehydratase family. UDP-glucuronic acid decarboxylase subfamily. As to quaternary structure, homohexamer, formed by a dimer of trimers.

It carries out the reaction UDP-alpha-D-glucuronate + NAD(+) = UDP-beta-L-threo-pentopyranos-4-ulose + CO2 + NADH. It catalyses the reaction UDP-4-amino-4-deoxy-beta-L-arabinose + (6R)-10-formyltetrahydrofolate = UDP-4-deoxy-4-formamido-beta-L-arabinose + (6S)-5,6,7,8-tetrahydrofolate + H(+). It participates in nucleotide-sugar biosynthesis; UDP-4-deoxy-4-formamido-beta-L-arabinose biosynthesis; UDP-4-deoxy-4-formamido-beta-L-arabinose from UDP-alpha-D-glucuronate: step 1/3. The protein operates within nucleotide-sugar biosynthesis; UDP-4-deoxy-4-formamido-beta-L-arabinose biosynthesis; UDP-4-deoxy-4-formamido-beta-L-arabinose from UDP-alpha-D-glucuronate: step 3/3. Its pathway is bacterial outer membrane biogenesis; lipopolysaccharide biosynthesis. Functionally, bifunctional enzyme that catalyzes the oxidative decarboxylation of UDP-glucuronic acid (UDP-GlcUA) to UDP-4-keto-arabinose (UDP-Ara4O) and the addition of a formyl group to UDP-4-amino-4-deoxy-L-arabinose (UDP-L-Ara4N) to form UDP-L-4-formamido-arabinose (UDP-L-Ara4FN). The modified arabinose is attached to lipid A and is required for resistance to polymyxin and cationic antimicrobial peptides. The polypeptide is Bifunctional polymyxin resistance protein ArnA (Yersinia pseudotuberculosis serotype O:3 (strain YPIII)).